The chain runs to 87 residues: U3-theraphotoxin-Hhn1i (87 aa).

The signal sequence occupies residues 1–24; it reads MVNMEASMFLTFAGLVLLFVVCYA. A propeptide spanning residues 25–52 is cleaved from the precursor; sequence SESEEKEFPKEMLSSIFAVDNDFKQEER. Cystine bridges form between Cys-54/Cys-67, Cys-61/Cys-72, and Cys-66/Cys-79.

Belongs to the neurotoxin 10 (Hwtx-1) family. 51 (Hntx-8) subfamily. Hntx-8 sub-subfamily. Expressed by the venom gland.

Its subcellular location is the secreted. In terms of biological role, ion channel inhibitor. The chain is U3-theraphotoxin-Hhn1i from Cyriopagopus hainanus (Chinese bird spider).